The following is an 81-amino-acid chain: MSHSVKIYDTCIGCTQCVRACPTDVLEMIPWDGCKAKQIASAPRTEDCVGCKRCESACPTDFLSVRVYLWHETTRSMGIAY.

2 consecutive 4Fe-4S ferredoxin-type domains span residues 2–31 and 39–68; these read SHSVKIYDTCIGCTQCVRACPTDVLEMIPW and IASAPRTEDCVGCKRCESACPTDFLSVRVY. [4Fe-4S] cluster is bound by residues C11, C14, C17, C21, C48, C51, C54, and C58.

The eukaryotic PSI reaction center is composed of at least 11 subunits. It depends on [4Fe-4S] cluster as a cofactor.

It localises to the plastid. It is found in the chloroplast thylakoid membrane. It catalyses the reaction reduced [plastocyanin] + hnu + oxidized [2Fe-2S]-[ferredoxin] = oxidized [plastocyanin] + reduced [2Fe-2S]-[ferredoxin]. Apoprotein for the two 4Fe-4S centers FA and FB of photosystem I (PSI); essential for photochemical activity. FB is the terminal electron acceptor of PSI, donating electrons to ferredoxin. The C-terminus interacts with PsaA/B/D and helps assemble the protein into the PSI complex. Required for binding of PsaD and PsaE to PSI. PSI is a plastocyanin-ferredoxin oxidoreductase, converting photonic excitation into a charge separation, which transfers an electron from the donor P700 chlorophyll pair to the spectroscopically characterized acceptors A0, A1, FX, FA and FB in turn. This is Photosystem I iron-sulfur center from Helianthus annuus (Common sunflower).